Here is a 570-residue protein sequence, read N- to C-terminus: Rho GTPase-activating protein gacEE (570 aa).

One can recognise a PH domain in the interval 127-233 (NSDISGVLLK…WVTTINNCID (107 aa)). The C2 domain maps to 224-343 (WVTTINNCID…PNGSEISLWL (120 aa)). Positions 260, 266, 312, 314, and 320 each coordinate Ca(2+). Residues 381-567 (NSLEAIVKNR…FVFENSQQIL (187 aa)) enclose the Rho-GAP domain.

It depends on Ca(2+) as a cofactor.

It localises to the cytoplasm. In terms of biological role, rho GTPase-activating protein involved in the signal transduction pathway. The protein is Rho GTPase-activating protein gacEE (gacEE) of Dictyostelium discoideum (Social amoeba).